Consider the following 229-residue polypeptide: Orotidine 5'-phosphate decarboxylase (229 aa).

Substrate contacts are provided by residues Asp11, Lys33, 61 to 70 (DMKLFDISAT), Thr116, Arg179, Gln188, Gly208, and Arg209. Lys63 (proton donor) is an active-site residue.

The protein belongs to the OMP decarboxylase family. Type 1 subfamily. In terms of assembly, homodimer.

The catalysed reaction is orotidine 5'-phosphate + H(+) = UMP + CO2. It functions in the pathway pyrimidine metabolism; UMP biosynthesis via de novo pathway; UMP from orotate: step 2/2. Catalyzes the decarboxylation of orotidine 5'-monophosphate (OMP) to uridine 5'-monophosphate (UMP). This Jannaschia sp. (strain CCS1) protein is Orotidine 5'-phosphate decarboxylase.